The sequence spans 557 residues: Dihydroxy-acid dehydratase (557 aa).

Cysteine 50 contacts [2Fe-2S] cluster. Aspartate 82 lines the Mg(2+) pocket. Cysteine 123 provides a ligand contact to [2Fe-2S] cluster. Mg(2+) is bound by residues aspartate 124 and lysine 125. Lysine 125 carries the post-translational modification N6-carboxylysine. Cysteine 195 is a [2Fe-2S] cluster binding site. Residue glutamate 447 participates in Mg(2+) binding. Serine 473 serves as the catalytic Proton acceptor.

It belongs to the IlvD/Edd family. Homodimer. Requires [2Fe-2S] cluster as cofactor. Mg(2+) is required as a cofactor.

The catalysed reaction is (2R)-2,3-dihydroxy-3-methylbutanoate = 3-methyl-2-oxobutanoate + H2O. The enzyme catalyses (2R,3R)-2,3-dihydroxy-3-methylpentanoate = (S)-3-methyl-2-oxopentanoate + H2O. The protein operates within amino-acid biosynthesis; L-isoleucine biosynthesis; L-isoleucine from 2-oxobutanoate: step 3/4. It participates in amino-acid biosynthesis; L-valine biosynthesis; L-valine from pyruvate: step 3/4. Functions in the biosynthesis of branched-chain amino acids. Catalyzes the dehydration of (2R,3R)-2,3-dihydroxy-3-methylpentanoate (2,3-dihydroxy-3-methylvalerate) into 2-oxo-3-methylpentanoate (2-oxo-3-methylvalerate) and of (2R)-2,3-dihydroxy-3-methylbutanoate (2,3-dihydroxyisovalerate) into 2-oxo-3-methylbutanoate (2-oxoisovalerate), the penultimate precursor to L-isoleucine and L-valine, respectively. This is Dihydroxy-acid dehydratase from Burkholderia pseudomallei (strain 1710b).